Reading from the N-terminus, the 433-residue chain is uncharacterized protein (433 aa).

The region spanning 1–59 (MGEEYEVEIGPVAHGGHCIARTSEGQVLFVRHALPGERVLARVTEGEEGARYLRADAVE) is the TRAM domain. [4Fe-4S] cluster-binding residues include cysteine 72, cysteine 80, cysteine 83, and cysteine 168. The S-adenosyl-L-methionine site is built by glutamine 262, tyrosine 291, glutamate 315, and aspartate 359. Catalysis depends on cysteine 386, which acts as the Nucleophile.

This sequence belongs to the class I-like SAM-binding methyltransferase superfamily. RNA M5U methyltransferase family.

This is an uncharacterized protein from Streptomyces avermitilis (strain ATCC 31267 / DSM 46492 / JCM 5070 / NBRC 14893 / NCIMB 12804 / NRRL 8165 / MA-4680).